The primary structure comprises 155 residues: Large ribosomal subunit protein eL24 (155 aa).

The disordered stretch occupies residues 92-155; that stretch reads AKRNMKPEVR…KSAPRVGGKR (64 aa). Residues 96-117 are compositionally biased toward basic and acidic residues; sequence MKPEVRKAQRDQAIKAAKEQKK. Positions 124–133 are enriched in low complexity; that stretch reads KASAPAPKAK.

The protein belongs to the eukaryotic ribosomal protein eL24 family.

The protein is Large ribosomal subunit protein eL24 (RpL24) of Spodoptera frugiperda (Fall armyworm).